We begin with the raw amino-acid sequence, 872 residues long: Eukaryotic translation initiation factor 3 subunit C (872 aa).

Residues 1–100 are disordered; it reads MSRFFRGGDD…KVKSAKDKRF (100 aa). Acidic residues-rich tracts occupy residues 16 to 59 and 72 to 87; these read SSEE…DEEE and SDDE…SDDE. Basic and acidic residues predominate over residues 88–100; it reads ATTKVKSAKDKRF. A PCI domain is found at 613-787; it reads FHMHINLELL…ETVIFRKGVE (175 aa). The tract at residues 812-872 is disordered; sequence TLEQKTQGSA…GGALGNAVRG (61 aa). The span at 831–848 shows a compositional bias: gly residues; the sequence is GGGQRGGGQRGGRGGART.

Belongs to the eIF-3 subunit C family. As to quaternary structure, component of the eukaryotic translation initiation factor 3 (eIF-3) complex.

The protein resides in the cytoplasm. In terms of biological role, component of the eukaryotic translation initiation factor 3 (eIF-3) complex, which is involved in protein synthesis of a specialized repertoire of mRNAs and, together with other initiation factors, stimulates binding of mRNA and methionyl-tRNAi to the 40S ribosome. The eIF-3 complex specifically targets and initiates translation of a subset of mRNAs involved in cell proliferation. The sequence is that of Eukaryotic translation initiation factor 3 subunit C (nip-1) from Neurospora crassa (strain ATCC 24698 / 74-OR23-1A / CBS 708.71 / DSM 1257 / FGSC 987).